The sequence spans 409 residues: Glycosaminoglycan xylosylkinase (409 aa).

Residues 1-6 (MKLKQR) lie on the Cytoplasmic side of the membrane. A helical; Signal-anchor for type II membrane protein membrane pass occupies residues 7-25 (VVLLAILLVIFIFTKVFLI). Topologically, residues 26 to 409 (DNLDTSAANR…VEDRMPLSHL (384 aa)) are lumenal. 2 residues coordinate ATP: Gln-107 and Lys-123. Asp-142 is a Mn(2+) binding site. Asn-193 carries an N-linked (GlcNAc...) asparagine glycan. 2 disulfides stabilise this stretch: Cys-196-Cys-211 and Cys-201-Cys-204. 222–225 (TLWL) is a binding site for ATP. Intrachain disulfides connect Cys-257/Cys-331 and Cys-332/Cys-389. Asp-289 is a catalytic residue. Positions 294 and 309 each coordinate ATP. Residue Asp-309 participates in Mn(2+) binding.

The protein belongs to the FAM20 family. Mn(2+) is required as a cofactor. In terms of tissue distribution, widely expressed. Strongly expressed in pancreas, spleen and fetal liver.

It is found in the golgi apparatus membrane. The catalysed reaction is 3-O-(beta-D-galactosyl-(1-&gt;3)-beta-D-galactosyl-(1-&gt;4)-beta-D-xylosyl)-L-seryl-[protein] + ATP = 3-O-(beta-D-galactosyl-(1-&gt;3)-beta-D-galactosyl-(1-&gt;4)-beta-D-2-O-phosphoxylosyl)-L-seryl-[protein] + ADP + H(+). Functionally, responsible for the 2-O-phosphorylation of xylose in the glycosaminoglycan-protein linkage region of proteoglycans thereby regulating the amount of mature GAG chains. Sulfated glycosaminoglycans (GAGs), including heparan sulfate and chondroitin sulfate, are synthesized on the so-called common GAG-protein linkage region (GlcUAbeta1-3Galbeta1-3Galbeta1-4Xylbeta1-O-Ser) of core proteins, which is formed by the stepwise addition of monosaccharide residues by the respective specific glycosyltransferases. Xylose 2-O-phosphorylation may influence the catalytic activity of B3GAT3 (GlcAT-I) which completes the precursor tetrasaccharide of GAG-protein linkage regions on which the repeating disaccharide region is synthesized. The protein is Glycosaminoglycan xylosylkinase of Homo sapiens (Human).